The following is a 298-amino-acid chain: Isochorismatase domain-containing protein 1 (298 aa).

At Tyr160 the chain carries Phosphotyrosine. Lys279 is subject to N6-succinyllysine.

The protein belongs to the isochorismatase family.

The sequence is that of Isochorismatase domain-containing protein 1 (ISOC1) from Homo sapiens (Human).